The chain runs to 353 residues: UPF0283 membrane protein YPA_1696 (353 aa).

3 consecutive transmembrane segments (helical) span residues 71–91 (MVTA…VQWV), 101–121 (IALG…GSVV), and 214–234 (ESAL…FIAW).

This sequence belongs to the UPF0283 family.

It is found in the cell inner membrane. The protein is UPF0283 membrane protein YPA_1696 of Yersinia pestis bv. Antiqua (strain Antiqua).